The sequence spans 369 residues: 4-hydroxy-3-methylbut-2-en-1-yl diphosphate synthase (flavodoxin) (369 aa).

Positions 270, 273, 305, and 312 each coordinate [4Fe-4S] cluster.

The protein belongs to the IspG family. Requires [4Fe-4S] cluster as cofactor.

The enzyme catalyses (2E)-4-hydroxy-3-methylbut-2-enyl diphosphate + oxidized [flavodoxin] + H2O + 2 H(+) = 2-C-methyl-D-erythritol 2,4-cyclic diphosphate + reduced [flavodoxin]. The protein operates within isoprenoid biosynthesis; isopentenyl diphosphate biosynthesis via DXP pathway; isopentenyl diphosphate from 1-deoxy-D-xylulose 5-phosphate: step 5/6. In terms of biological role, converts 2C-methyl-D-erythritol 2,4-cyclodiphosphate (ME-2,4cPP) into 1-hydroxy-2-methyl-2-(E)-butenyl 4-diphosphate. This Pseudomonas putida (strain ATCC 47054 / DSM 6125 / CFBP 8728 / NCIMB 11950 / KT2440) protein is 4-hydroxy-3-methylbut-2-en-1-yl diphosphate synthase (flavodoxin).